A 582-amino-acid polypeptide reads, in one-letter code: Phosphoribosylaminoimidazole carboxylase (582 aa).

The ATP-grasp domain maps to 114-305 (KKYLAERGVA…QFENHLRAIL (192 aa)). ATP is bound at residue 143 to 200 (AGRLGLPLMLKAKTLAYDGRGNSPLKSASSEDIQASLKFLGDRPLYAEGWAPFVKEVA).

This sequence in the C-terminal section; belongs to the AIR carboxylase family. Class I subfamily.

It carries out the reaction 5-amino-1-(5-phospho-D-ribosyl)imidazole-4-carboxylate + H(+) = 5-amino-1-(5-phospho-beta-D-ribosyl)imidazole + CO2. It participates in purine metabolism; IMP biosynthesis via de novo pathway; 5-amino-1-(5-phospho-D-ribosyl)imidazole-4-carboxylate from 5-amino-1-(5-phospho-D-ribosyl)imidazole (carboxylase route): step 1/1. The polypeptide is Phosphoribosylaminoimidazole carboxylase (ADE2) (Cryptococcus neoformans var. neoformans serotype D (strain B-3501A) (Filobasidiella neoformans)).